The sequence spans 202 residues: MDTLTPKRRAIFEFIRERIAEHGQPPSLADIATRFGFASRSVARKHITALCQAGYIDVTPNQARGIRLAEPLRRPEILEIPVLGQVAAGAPIGPDLGIHEQLLLDPSLFRRTPDYLLKVRGDSMIDDGIFDGDLVGILQQADARDGQIVVARLDGEVTIKRLQRQGGTYRLLPRNPAYAPIDVQPEQDFFIEGVFCGLLRRD.

Residues 28–48 constitute a DNA-binding region (H-T-H motif); sequence LADIATRFGFASRSVARKHIT. Residues Ser123 and Lys160 each act as for autocatalytic cleavage activity in the active site.

This sequence belongs to the peptidase S24 family. As to quaternary structure, homodimer.

The catalysed reaction is Hydrolysis of Ala-|-Gly bond in repressor LexA.. In terms of biological role, represses a number of genes involved in the response to DNA damage (SOS response), including recA and lexA. In the presence of single-stranded DNA, RecA interacts with LexA causing an autocatalytic cleavage which disrupts the DNA-binding part of LexA, leading to derepression of the SOS regulon and eventually DNA repair. The sequence is that of LexA repressor 2 from Pseudomonas putida (strain ATCC 47054 / DSM 6125 / CFBP 8728 / NCIMB 11950 / KT2440).